We begin with the raw amino-acid sequence, 89 residues long: Small ribosomal subunit protein uS15 (89 aa).

This sequence belongs to the universal ribosomal protein uS15 family. Part of the 30S ribosomal subunit. Forms a bridge to the 50S subunit in the 70S ribosome, contacting the 23S rRNA.

Its function is as follows. One of the primary rRNA binding proteins, it binds directly to 16S rRNA where it helps nucleate assembly of the platform of the 30S subunit by binding and bridging several RNA helices of the 16S rRNA. Functionally, forms an intersubunit bridge (bridge B4) with the 23S rRNA of the 50S subunit in the ribosome. The chain is Small ribosomal subunit protein uS15 from Histophilus somni (strain 129Pt) (Haemophilus somnus).